The sequence spans 588 residues: Aspartate--tRNA ligase (588 aa).

Glu-172 is an L-aspartate binding site. The aspartate stretch occupies residues 196 to 199 (QLFK). Arg-218 is a binding site for L-aspartate. ATP-binding positions include 218–220 (RDE) and Gln-227. Position 449 (His-449) interacts with L-aspartate. Glu-483 is a binding site for ATP. Arg-490 contributes to the L-aspartate binding site. ATP is bound at residue 535-538 (GLDR).

This sequence belongs to the class-II aminoacyl-tRNA synthetase family. Type 1 subfamily. In terms of assembly, homodimer.

Its subcellular location is the cytoplasm. It catalyses the reaction tRNA(Asp) + L-aspartate + ATP = L-aspartyl-tRNA(Asp) + AMP + diphosphate. Catalyzes the attachment of L-aspartate to tRNA(Asp) in a two-step reaction: L-aspartate is first activated by ATP to form Asp-AMP and then transferred to the acceptor end of tRNA(Asp). This is Aspartate--tRNA ligase from Haemophilus influenzae (strain PittGG).